A 130-amino-acid polypeptide reads, in one-letter code: Small ribosomal subunit protein uS8 (130 aa).

It belongs to the universal ribosomal protein uS8 family. Part of the 30S ribosomal subunit. Contacts proteins S5 and S12.

One of the primary rRNA binding proteins, it binds directly to 16S rRNA central domain where it helps coordinate assembly of the platform of the 30S subunit. The protein is Small ribosomal subunit protein uS8 of Shewanella baltica (strain OS223).